The chain runs to 270 residues: Phosphatidylglycerol--prolipoprotein diacylglyceryl transferase (270 aa).

The next 7 helical transmembrane spans lie at 14–34, 60–80, 95–115, 128–148, 176–196, 202–222, and 238–258; these read VIFEIGPIGLRWYGLMYLLGF, LLFNGFMGVFLGGRIGYVLFY, VWEGGMSFHGGLIGVILAMLI, ADFVAPLIPFGLGMGRIGNFI, SQLYEAVLEGIVLFFILNWYI, IGATAGLFLLGYGIFRFIVEF, and ISMGQILSTPMILIGAVIMLV. Residue Arg143 participates in a 1,2-diacyl-sn-glycero-3-phospho-(1'-sn-glycerol) binding.

The protein belongs to the Lgt family.

Its subcellular location is the cell inner membrane. The catalysed reaction is L-cysteinyl-[prolipoprotein] + a 1,2-diacyl-sn-glycero-3-phospho-(1'-sn-glycerol) = an S-1,2-diacyl-sn-glyceryl-L-cysteinyl-[prolipoprotein] + sn-glycerol 1-phosphate + H(+). Its pathway is protein modification; lipoprotein biosynthesis (diacylglyceryl transfer). Catalyzes the transfer of the diacylglyceryl group from phosphatidylglycerol to the sulfhydryl group of the N-terminal cysteine of a prolipoprotein, the first step in the formation of mature lipoproteins. The sequence is that of Phosphatidylglycerol--prolipoprotein diacylglyceryl transferase from Pasteurella multocida (strain Pm70).